The following is a 198-amino-acid chain: Dual specificity protein phosphatase 14 (198 aa).

Residues 26 to 167 (GIAQITSSLF…LIDYERQLFG (142 aa)) form the Tyrosine-protein phosphatase domain. Catalysis depends on C111, which acts as the Phosphocysteine intermediate.

Belongs to the protein-tyrosine phosphatase family. Non-receptor class dual specificity subfamily. Interacts with CD28.

The catalysed reaction is O-phospho-L-tyrosyl-[protein] + H2O = L-tyrosyl-[protein] + phosphate. It carries out the reaction O-phospho-L-seryl-[protein] + H2O = L-seryl-[protein] + phosphate. The enzyme catalyses O-phospho-L-threonyl-[protein] + H2O = L-threonyl-[protein] + phosphate. Involved in the inactivation of MAP kinases. Dephosphorylates ERK, JNK and p38 MAP-kinases. Plays a negative role in TCR signaling by dephosphorylating MAP3K7 adapter TAB1 leading to its inactivation. This Bos taurus (Bovine) protein is Dual specificity protein phosphatase 14 (DUSP14).